Here is a 274-residue protein sequence, read N- to C-terminus: Triosephosphate isomerase (274 aa).

31 to 33 (NWK) provides a ligand contact to substrate. The active-site Electrophile is the histidine 118. Residue glutamate 188 is the Proton acceptor of the active site. Substrate is bound by residues glycine 194, serine 234, and 255-256 (GG).

It belongs to the triosephosphate isomerase family. Homodimer.

It localises to the cytoplasm. It carries out the reaction D-glyceraldehyde 3-phosphate = dihydroxyacetone phosphate. It functions in the pathway carbohydrate biosynthesis; gluconeogenesis. The protein operates within carbohydrate degradation; glycolysis; D-glyceraldehyde 3-phosphate from glycerone phosphate: step 1/1. Involved in the gluconeogenesis. Catalyzes stereospecifically the conversion of dihydroxyacetone phosphate (DHAP) to D-glyceraldehyde-3-phosphate (G3P). In Chlamydia trachomatis serovar A (strain ATCC VR-571B / DSM 19440 / HAR-13), this protein is Triosephosphate isomerase.